A 202-amino-acid polypeptide reads, in one-letter code: High mobility group protein B3 (202 aa).

2 DNA-binding regions (HMG box) span residues 9-79 (PKGK…KDYG) and 93-161 (PKRP…ADYK). Residues Cys-23 and Cys-45 each carry the cysteine sulfonic acid (-SO3H); alternate modification. Cys-23 and Cys-45 are oxidised to a cystine. Residues 71–98 (YDREMKDYGPAKGGKKKKDPNAPKRPPS) are disordered. At Cys-104 the chain carries Cysteine sulfonic acid (-SO3H). Residues 161 to 202 (KSKGKFDGAKGAATKAARKKVEEEDEEEEEDEEEEDEDDDDE) form a disordered region. The segment covering 183–202 (EEDEEEEEDEEEEDEDDDDE) has biased composition (acidic residues).

It belongs to the HMGB family. Reduction/oxidation of cysteine residues Cys-23, Cys-45 and Cys-104 and a possible intramolecular disulfide bond involving Cys-23 and Cys-45 give rise to different redox forms with specific functional activities in various cellular compartments: 1- fully reduced HMGB3 (HMGB3C23hC45hC104h), 2- disulfide HMGB3 (HMGB3C23-C45C104h) and 3- sulfonyl HMGB3 (HMGB3C23soC45soC104so).

The protein resides in the nucleus. It is found in the chromosome. It localises to the cytoplasm. Its function is as follows. Multifunctional protein with various roles in different cellular compartments. May act in a redox sensitive manner. Associates with chromatin and binds DNA with a preference for non-canonical DNA structures such as single-stranded DNA. Can bend DNA and enhance DNA flexibility by looping thus providing a mechanism to promote activities on various gene promoters. Binds to the delta-1 crystallin/ASL1 enhancer. Proposed to be involved in the innate immune response to nucleic acids by acting as a cytoplasmic promiscuous immunogenic DNA/RNA sensor. The chain is High mobility group protein B3 (HMGB3) from Gallus gallus (Chicken).